The sequence spans 183 residues: Protein jagunal homolog 1 (183 aa).

At 1–39 (MASRAGPRAAGTDGSDFQHRERVAMHYQMSVTLKYEIKK) the chain is on the cytoplasmic side. The residue at position 3 (serine 3) is a Phosphoserine. The chain crosses the membrane as a helical span at residues 40–60 (LIYVHLVIWLLLVAKMSVGHL). Over 61–71 (RLLSHDQVAMP) the chain is Lumenal. A helical transmembrane segment spans residues 72 to 92 (YQWEYPYLLSIVPSVLGLLSF). Residues 93 to 96 (PRNN) lie on the Cytoplasmic side of the membrane. A helical membrane pass occupies residues 97-117 (ISYLVLSMISMGLFSIAPLIY). Over 118–137 (GSMEMFPAAQQLYRHGKAYR) the chain is Lumenal. Residues 138-158 (FLFGFSAVSVMYLVLVLAVQV) form a helical membrane-spanning segment. Topologically, residues 159-183 (HAWQLYYSKKLLDSWFTSTQEKKRK) are cytoplasmic.

Belongs to the jagunal family. Interacts with COPA, COPB2 and COPG2.

Its subcellular location is the endoplasmic reticulum membrane. Functionally, endoplasmic reticulum transmembrane protein involved in vesicle-mediated transport, which is required for neutrophil function. Required for vesicle-mediated transport; it is however unclear whether it is involved in early secretory pathway or intracellular protein transport. Acts as a regulator of neutrophil function, probably via its role in vesicle-mediated transport: required for defense against fungal pathogens and for granulocyte colony-stimulating factor (GM-CSF) signaling pathway; possibly by regulating glycosylation and/or targeting of proteins contributing to the viability and migration of neutrophils. This is Protein jagunal homolog 1 from Mus musculus (Mouse).